The sequence spans 458 residues: MNRGVPFRHLLLVLQLALLPAATQGKKVVLGKKGDTVELTCTASQKKSIQFHWKNSNQIKILGNQGSFLTKGPSKLNDRADSRRSLWDQGNFPLIIKNLKIEDSDTYICEVEDQKEEVQLLVFGLTANSDTHLLQGQSLTLTLESPPGSSPSVQCRSPRGKNIQGGKTLSVSQLELQDSGTWTCTVLQNQKKVEFKIDIVVLAFQKASSIVYKKEGEQVEFSFPLAFTVEKLTGSGELWWQAERASSSKSWITFDLKNKEVSVKRVTQDPKLQMGKKLPLHLTLPQALPQYAGSGNLTLALEAKTGKLHQEVNLVVMRATQLQKNLTCEVWGPTSPKLMLSLKLENKEAKVSKREKAVWVLNPEAGMWQCLLSDSGQVLLESNIKVLPTWSTPVQPMALIVLGGVAGLLLFIGLGIFFCVRCRHRRRQAERMSQIKRLLSEKKTCQCPHRFQKTCSPI.

Positions 1 to 25 (MNRGVPFRHLLLVLQLALLPAATQG) are cleaved as a signal peptide. One can recognise an Ig-like V-type domain in the interval 26 to 125 (KKVVLGKKGD…EEVQLLVFGL (100 aa)). At 26–396 (KKVVLGKKGD…LPTWSTPVQP (371 aa)) the chain is on the extracellular side. Cystine bridges form between Cys-41–Cys-109 and Cys-155–Cys-184. 3 Ig-like C2-type domains span residues 126–203 (TANS…VVLA), 204–317 (FQKA…LVVM), and 318–374 (RATQ…LLSD). N-linked (GlcNAc...) asparagine glycans are attached at residues Asn-296 and Asn-325. A disulfide bridge connects residues Cys-328 and Cys-370. A helical membrane pass occupies residues 397-418 (MALIVLGGVAGLLLFIGLGIFF). S-palmitoyl cysteine attachment occurs at residues Cys-419 and Cys-422. At 419 to 458 (CVRCRHRRRQAERMSQIKRLLSEKKTCQCPHRFQKTCSPI) the chain is on the cytoplasmic side. The tract at residues 427 to 455 (RQAERMSQIKRLLSEKKTCQCPHRFQKTC) is HIV-1 Vpu-susceptibility domain. Phosphoserine is present on residues Ser-433, Ser-440, and Ser-456.

As to quaternary structure, forms disulfide-linked homodimers at the cell surface. Interacts with LCK. Interacts with PTK2/FAK1. Binds to P4HB/PDI. Interacts with IL16; this interaction induces a CD4-dependent signaling in lymphocytes. Interacts (via Ig-like V-type domain) with MHCII alpha chain (via alpha-2 domain) and beta chain (via beta-2 domain); this interaction increases the affinity of TCR for peptide-MHCII. CD4 oligomerization via Ig-like C2-type 2 and 3 domains appears to be required for stable binding to MHCII and adhesion between T cells and APCs. Interacts with Aedes aegypti long form salivary protein D7L2. Interacts with Aedes aegypti neutrophil-stimulating factor 1. Interacts with Aedes aegypti venom allergen-1. (Microbial infection) Interacts with HIV-1 Envelope polyprotein gp160 and protein Vpu. In terms of assembly, (Microbial infection) Interacts with Human Herpes virus 7 surface proteins. Palmitoylation and association with LCK contribute to the enrichment of CD4 in lipid rafts. In terms of processing, phosphorylated by PKC; phosphorylation at Ser-433 plays an important role for CD4 internalization. In terms of tissue distribution, highly expressed in T-helper cells. The presence of CD4 is a hallmark of T-helper cells which are specialized in the activation and growth of cytotoxic T-cells, regulation of B cells, or activation of phagocytes. CD4 is also present in other immune cells such as macrophages, dendritic cells or NK cells.

Its subcellular location is the cell membrane. In terms of biological role, integral membrane glycoprotein that plays an essential role in the immune response and serves multiple functions in responses against both external and internal offenses. In T-cells, functions primarily as a coreceptor for MHC class II molecule:peptide complex. The antigens presented by class II peptides are derived from extracellular proteins while class I peptides are derived from cytosolic proteins. Interacts simultaneously with the T-cell receptor (TCR) and the MHC class II presented by antigen presenting cells (APCs). In turn, recruits the Src kinase LCK to the vicinity of the TCR-CD3 complex. LCK then initiates different intracellular signaling pathways by phosphorylating various substrates ultimately leading to lymphokine production, motility, adhesion and activation of T-helper cells. In other cells such as macrophages or NK cells, plays a role in differentiation/activation, cytokine expression and cell migration in a TCR/LCK-independent pathway. Participates in the development of T-helper cells in the thymus and triggers the differentiation of monocytes into functional mature macrophages. Its function is as follows. (Microbial infection) Primary receptor for human immunodeficiency virus-1 (HIV-1). Down-regulated by HIV-1 Vpu. Acts as a receptor for Human Herpes virus 7/HHV-7. This is T-cell surface glycoprotein CD4 (CD4) from Homo sapiens (Human).